Reading from the N-terminus, the 319-residue chain is Methionyl-tRNA formyltransferase (319 aa).

110–113 (SLLP) is a binding site for (6S)-5,6,7,8-tetrahydrofolate.

Belongs to the Fmt family.

It carries out the reaction L-methionyl-tRNA(fMet) + (6R)-10-formyltetrahydrofolate = N-formyl-L-methionyl-tRNA(fMet) + (6S)-5,6,7,8-tetrahydrofolate + H(+). Attaches a formyl group to the free amino group of methionyl-tRNA(fMet). The formyl group appears to play a dual role in the initiator identity of N-formylmethionyl-tRNA by promoting its recognition by IF2 and preventing the misappropriation of this tRNA by the elongation apparatus. This is Methionyl-tRNA formyltransferase from Geobacillus thermodenitrificans (strain NG80-2).